The following is a 205-amino-acid chain: Glycerol-3-phosphate acyltransferase (205 aa).

Helical transmembrane passes span 8 to 28, 57 to 77, 84 to 104, 118 to 138, 143 to 163, and 164 to 184; these read IALFTLLVSYLLGSLPSGYLA, TPALFVFFIDVTKGIGAILIA, ESLQIAAGLASLSGHIWPVWL, VFLGISWQVGLGSLGIFLLIL, IVSLASISAAISLPVLMLINS, and KETFSIPYIVISFIAMILVLW.

The protein belongs to the PlsY family. In terms of assembly, probably interacts with PlsX.

It localises to the cell inner membrane. The catalysed reaction is an acyl phosphate + sn-glycerol 3-phosphate = a 1-acyl-sn-glycero-3-phosphate + phosphate. It participates in lipid metabolism; phospholipid metabolism. Functionally, catalyzes the transfer of an acyl group from acyl-phosphate (acyl-PO(4)) to glycerol-3-phosphate (G3P) to form lysophosphatidic acid (LPA). This enzyme utilizes acyl-phosphate as fatty acyl donor, but not acyl-CoA or acyl-ACP. The sequence is that of Glycerol-3-phosphate acyltransferase from Prochlorococcus marinus (strain SARG / CCMP1375 / SS120).